Consider the following 280-residue polypeptide: Hydroxyethylthiazole kinase (280 aa).

M50 lines the substrate pocket. 2 residues coordinate ATP: K125 and T178. Position 205 (G205) interacts with substrate.

It belongs to the Thz kinase family. The cofactor is Mg(2+).

It carries out the reaction 5-(2-hydroxyethyl)-4-methylthiazole + ATP = 4-methyl-5-(2-phosphooxyethyl)-thiazole + ADP + H(+). It functions in the pathway cofactor biosynthesis; thiamine diphosphate biosynthesis; 4-methyl-5-(2-phosphoethyl)-thiazole from 5-(2-hydroxyethyl)-4-methylthiazole: step 1/1. In terms of biological role, catalyzes the phosphorylation of the hydroxyl group of 4-methyl-5-beta-hydroxyethylthiazole (THZ). The sequence is that of Hydroxyethylthiazole kinase from Lacticaseibacillus paracasei (strain ATCC 334 / BCRC 17002 / CCUG 31169 / CIP 107868 / KCTC 3260 / NRRL B-441) (Lactobacillus paracasei).